A 424-amino-acid polypeptide reads, in one-letter code: Phosphoribosylamine--glycine ligase (424 aa).

An ATP-grasp domain is found at 111 to 312 (KAFVKECGIK…LLDLCLATAK (202 aa)). Residue 137–189 (IQNASFPLVIKALNKNTSIVYQEEEAIKILEDAFKQSNEPVIIEPFLEGFELS) coordinates ATP.

The protein belongs to the GARS family.

It catalyses the reaction 5-phospho-beta-D-ribosylamine + glycine + ATP = N(1)-(5-phospho-beta-D-ribosyl)glycinamide + ADP + phosphate + H(+). The protein operates within purine metabolism; IMP biosynthesis via de novo pathway; N(1)-(5-phospho-D-ribosyl)glycinamide from 5-phospho-alpha-D-ribose 1-diphosphate: step 2/2. This Helicobacter pylori (strain ATCC 700392 / 26695) (Campylobacter pylori) protein is Phosphoribosylamine--glycine ligase (purD).